We begin with the raw amino-acid sequence, 396 residues long: Elongation factor Tu (396 aa).

A tr-type G domain is found at 11 to 205 (KPHVNIGTIG…TVDEYVPTPE (195 aa)). The interval 20 to 27 (GHVDHGKT) is G1. 20 to 27 (GHVDHGKT) lines the GTP pocket. Position 27 (Thr27) interacts with Mg(2+). Positions 61-65 (GITIN) are G2. The segment at 82 to 85 (DAPG) is G3. Residues 82-86 (DAPGH) and 137-140 (NKTD) contribute to the GTP site. Positions 137–140 (NKTD) are G4. Residues 175–177 (SAL) form a G5 region.

It belongs to the TRAFAC class translation factor GTPase superfamily. Classic translation factor GTPase family. EF-Tu/EF-1A subfamily. Monomer.

The protein resides in the cytoplasm. It carries out the reaction GTP + H2O = GDP + phosphate + H(+). In terms of biological role, GTP hydrolase that promotes the GTP-dependent binding of aminoacyl-tRNA to the A-site of ribosomes during protein biosynthesis. The chain is Elongation factor Tu from Latilactobacillus sakei subsp. sakei (strain 23K) (Lactobacillus sakei subsp. sakei).